We begin with the raw amino-acid sequence, 1028 residues long: Beta-galactosidase (1028 aa).

Residues N104 and D203 each contribute to the substrate site. Residue D203 participates in Na(+) binding. Mg(2+) is bound by residues E418, H420, and E463. Substrate contacts are provided by residues E463 and E539–H542. The active-site Proton donor is the E463. Residue E539 is the Nucleophile of the active site. N599 is a Mg(2+) binding site. Residues F603 and N606 each coordinate Na(+). Positions 606 and 1003 each coordinate substrate.

The protein belongs to the glycosyl hydrolase 2 family. In terms of assembly, homotetramer. Mg(2+) is required as a cofactor. Requires Na(+) as cofactor.

The enzyme catalyses Hydrolysis of terminal non-reducing beta-D-galactose residues in beta-D-galactosides.. The polypeptide is Beta-galactosidase (Enterobacter cloacae).